Reading from the N-terminus, the 967-residue chain is MANKMEKMASIDAQLRQLAPAKVSEDDKLIEYDALLLDRFLDILQDLHGEDLKDSVQEVYELSAEYERKHDPKKLEELGKLITGLDAGDSIVVAKSFSHMLNLANLAEEVQIAHRRRNKLKKGDFRDESNATTESDIEETLKKLVFNMKKSPQEVFDALKNQTVDLVLTAHPTQSVRRSLLQKHARVRNCLSQLYAKDITPDDKQELDESLQREIQAAFRTDEIKRTPPTPQDEMRAGMSYFHETIWKGVPKFLRRVDTALKNIGINERVPYNAPLIQFSSWMGGDRDGNPRVTPEVTRDVCLLARMMAANLYYSQIEDLMFELSMWRCNDELRDRAEELHRNSKKDEVAKHYIEFWKKVPLNEPYRVILGHVRDKLYRTRERSRYLLAHGYSDIPEEDTFTNFDEFLEPLELCYRSLCFCGDRAIADGSLLDFLRQVSTFGLSLVRLDIRQESDRHTDVMDAITKHLEIGSYQEWSEEKRQEWLLSELVGKRPLFGPDLPTTDEIRDVLDTFHVIAELPSDNFGAYIISMATAPSDVLAVELLQRECKIKNPLRVVPLFEKLADLEAAPAALARLFSIDWYRNRIDGKQEVMIGYSDSGKDAGRFSAAWQLYKAQEELINVAQKFSVKLTMFHGRGGTVGRGGGPTHLAILSQPPDTIHGSLRVTVQGEVIEQSFGEEHLCFRTLQRFTAATLEHGMRPPSSPKPEWRALMDQMAIIATEEYRSIVFKEPRFVEYFRLATPEMEYGRMNIGSRPAKRRPSGGIETLRAIPWIFPWTQTRFHLPVWLGFGSAFKQVIEKDVKNLHMLQDMYNQWPFFRVTIDLVEMVFAKGDPGIAALNDRLLVSQNLWPFGEQLRNKYEETKKLLLQVATHKEVLEGDPYLKQRLRLRDSYITTLNVFQAYTLKRIRDPKSSVNASRLPLSRESPEATKPADELVTLNPTSEYAPGLEDTLILTMKGIAAGMQNTG.

Ser10 bears the Phosphoserine mark. Catalysis depends on residues His171 and Lys601. The segment at 915–936 (NASRLPLSRESPEATKPADELV) is disordered. The span at 924–933 (ESPEATKPAD) shows a compositional bias: basic and acidic residues.

The protein belongs to the PEPCase type 1 family. Homotetramer. Mg(2+) is required as a cofactor.

It localises to the cytoplasm. It catalyses the reaction oxaloacetate + phosphate = phosphoenolpyruvate + hydrogencarbonate. With respect to regulation, by light-reversible phosphorylation. Through the carboxylation of phosphoenolpyruvate (PEP) it forms oxaloacetate, a four-carbon dicarboxylic acid source for the tricarboxylic acid cycle. This is Phosphoenolpyruvate carboxylase from Pisum sativum (Garden pea).